The sequence spans 530 residues: Membrane protein insertase YidC (530 aa).

4 helical membrane passes run 5 to 25 (VVIAVILSIVVLYAFSYMFPP), 348 to 368 (YGLAIIIITIILKVLFFPLTH), 418 to 438 (LPMLVQIPVFFALYKALMFSI), and 492 to 512 (PVVFTFMFLNFPAGLVLYWLI).

It belongs to the OXA1/ALB3/YidC family. Type 1 subfamily. In terms of assembly, interacts with the Sec translocase complex via SecD. Specifically interacts with transmembrane segments of nascent integral membrane proteins during membrane integration.

It is found in the cell inner membrane. Required for the insertion and/or proper folding and/or complex formation of integral membrane proteins into the membrane. Involved in integration of membrane proteins that insert both dependently and independently of the Sec translocase complex, as well as at least some lipoproteins. Aids folding of multispanning membrane proteins. The polypeptide is Membrane protein insertase YidC (Geotalea daltonii (strain DSM 22248 / JCM 15807 / FRC-32) (Geobacter daltonii)).